The chain runs to 129 residues: Glycine cleavage system H protein (129 aa).

The 83-residue stretch at Leu-24 to Lys-106 folds into the Lipoyl-binding domain. Lys-65 carries the post-translational modification N6-lipoyllysine.

This sequence belongs to the GcvH family. In terms of assembly, the glycine cleavage system is composed of four proteins: P, T, L and H. The cofactor is (R)-lipoate.

In terms of biological role, the glycine cleavage system catalyzes the degradation of glycine. The H protein shuttles the methylamine group of glycine from the P protein to the T protein. In Prochlorococcus marinus (strain MIT 9215), this protein is Glycine cleavage system H protein.